Consider the following 486-residue polypeptide: tRNA sulfurtransferase (486 aa).

The THUMP domain maps to 60–166 (QKICAMLINI…DNQLFIIIKR (107 aa)). Residues 184-185 (LI), K266, G288, and Q297 contribute to the ATP site. C345 and C458 are joined by a disulfide. Positions 406 to 484 (LDSTDVVLDI…GFSNVKIYRP (79 aa)) constitute a Rhodanese domain. The active-site Cysteine persulfide intermediate is C458.

It belongs to the ThiI family.

It is found in the cytoplasm. It carries out the reaction [ThiI sulfur-carrier protein]-S-sulfanyl-L-cysteine + a uridine in tRNA + 2 reduced [2Fe-2S]-[ferredoxin] + ATP + H(+) = [ThiI sulfur-carrier protein]-L-cysteine + a 4-thiouridine in tRNA + 2 oxidized [2Fe-2S]-[ferredoxin] + AMP + diphosphate. It catalyses the reaction [ThiS sulfur-carrier protein]-C-terminal Gly-Gly-AMP + S-sulfanyl-L-cysteinyl-[cysteine desulfurase] + AH2 = [ThiS sulfur-carrier protein]-C-terminal-Gly-aminoethanethioate + L-cysteinyl-[cysteine desulfurase] + A + AMP + 2 H(+). It participates in cofactor biosynthesis; thiamine diphosphate biosynthesis. Catalyzes the ATP-dependent transfer of a sulfur to tRNA to produce 4-thiouridine in position 8 of tRNAs, which functions as a near-UV photosensor. Also catalyzes the transfer of sulfur to the sulfur carrier protein ThiS, forming ThiS-thiocarboxylate. This is a step in the synthesis of thiazole, in the thiamine biosynthesis pathway. The sulfur is donated as persulfide by IscS. The chain is tRNA sulfurtransferase from Blochmanniella pennsylvanica (strain BPEN).